Here is a 348-residue protein sequence, read N- to C-terminus: DnaJ homolog subfamily B member 5 (348 aa).

Residues 4 to 68 (DYYKILGIPS…KKRSLYDQYG (65 aa)) form the J domain.

The protein is DnaJ homolog subfamily B member 5 (Dnajb5) of Mus musculus (Mouse).